Reading from the N-terminus, the 425-residue chain is NAC domain-containing protein 10 (425 aa).

The segment covering 1–10 (MESPDSSSGS) has biased composition (polar residues). Residues 1–34 (MESPDSSSGSAPPRVLRRQQQQPGSAPELPPGFR) form a disordered region. Positions 12–23 (PPRVLRRQQQQP) are enriched in low complexity. The NAC domain occupies 29–200 (LPPGFRFHPT…DWVLCRIYKK (172 aa)). Residues 129-206 (VGVKKALVFY…IYKKTNKAGA (78 aa)) mediate DNA binding.

As to expression, highest expression in stamens. Expressed in leaves.

Its subcellular location is the nucleus. Its function is as follows. Transcription factor of the NAC family associated with male fertility. Involved in anther development, but not in senescence. Reduced expression of NAC5 via RNAi leads to male-sterility. This Oryza sativa subsp. japonica (Rice) protein is NAC domain-containing protein 10.